The primary structure comprises 852 residues: Probable inorganic carbon transporter subunit DabA (852 aa).

Zn(2+) is bound by residues Cys-370, Asp-372, His-554, and Cys-569.

Belongs to the inorganic carbon transporter (TC 9.A.2) DabA family. Forms a complex with DabB. Zn(2+) serves as cofactor.

The protein localises to the cell inner membrane. Functionally, part of an energy-coupled inorganic carbon pump. The sequence is that of Probable inorganic carbon transporter subunit DabA from Novosphingobium aromaticivorans (strain ATCC 700278 / DSM 12444 / CCUG 56034 / CIP 105152 / NBRC 16084 / F199).